The sequence spans 279 residues: 3-methyl-2-oxobutanoate hydroxymethyltransferase (279 aa).

Asp-43 and Asp-82 together coordinate Mg(2+). Residues Asp-43–Ser-44, Asp-82, and Lys-112 each bind 3-methyl-2-oxobutanoate. Glu-114 is a Mg(2+) binding site. Glu-181 functions as the Proton acceptor in the catalytic mechanism.

The protein belongs to the PanB family. As to quaternary structure, homodecamer; pentamer of dimers. It depends on Mg(2+) as a cofactor.

The protein localises to the cytoplasm. It carries out the reaction 3-methyl-2-oxobutanoate + (6R)-5,10-methylene-5,6,7,8-tetrahydrofolate + H2O = 2-dehydropantoate + (6S)-5,6,7,8-tetrahydrofolate. It participates in cofactor biosynthesis; (R)-pantothenate biosynthesis; (R)-pantoate from 3-methyl-2-oxobutanoate: step 1/2. Its function is as follows. Catalyzes the reversible reaction in which hydroxymethyl group from 5,10-methylenetetrahydrofolate is transferred onto alpha-ketoisovalerate to form ketopantoate. This is 3-methyl-2-oxobutanoate hydroxymethyltransferase from Bacillus pumilus (strain SAFR-032).